The primary structure comprises 71 residues: Omega-conotoxin SO-3 (71 aa).

Positions 1-22 (MKLTCMVIVAVLLLTACQLITA) are cleaved as a signal peptide. The propeptide occupies 23–45 (DDSRGTQKHRTLRSKTKLSMSTR). 3 disulfide bridges follow: Cys46–Cys61, Cys53–Cys65, and Cys60–Cys70. Cys70 bears the Cysteine amide mark.

The protein belongs to the conotoxin O1 superfamily. In terms of tissue distribution, expressed by the venom duct.

Its subcellular location is the secreted. Functionally, omega-conotoxins act at presynaptic membranes, they bind and block voltage-gated calcium channels (Cav). This peptide selectively targets Cav2.2/CACNA1B (IC(50)=160 nM) voltage-gated calcium channels. When tested in mammals, this toxin displays an analgesic potency similar to MVIIA in a range of acute and chronic pain models in rodents, but has less adverse effects (tremor, diminution of spontaneous locomotor activity and bad coordinated locomotion) compared with identical dosages of MVIIA injected intrathecally. The sequence is that of Omega-conotoxin SO-3 from Conus striatus (Striated cone).